The following is a 328-amino-acid chain: Fructose-1,6-bisphosphatase class 1 (328 aa).

The Mg(2+) site is built by glutamate 89, aspartate 110, leucine 112, and aspartate 113. Substrate is bound by residues asparagine 206, tyrosine 234, tyrosine 252–tyrosine 254, and lysine 264. Glutamate 270 contributes to the Mg(2+) binding site.

It belongs to the FBPase class 1 family. In terms of assembly, homotetramer. The cofactor is Mg(2+).

The protein resides in the cytoplasm. It catalyses the reaction beta-D-fructose 1,6-bisphosphate + H2O = beta-D-fructose 6-phosphate + phosphate. Its pathway is carbohydrate biosynthesis; gluconeogenesis. The polypeptide is Fructose-1,6-bisphosphatase class 1 (Wigglesworthia glossinidia brevipalpis).